The primary structure comprises 330 residues: Phenylalanine--tRNA ligase alpha subunit (330 aa).

Glu246 provides a ligand contact to Mg(2+).

This sequence belongs to the class-II aminoacyl-tRNA synthetase family. Phe-tRNA synthetase alpha subunit type 1 subfamily. In terms of assembly, tetramer of two alpha and two beta subunits. It depends on Mg(2+) as a cofactor.

Its subcellular location is the cytoplasm. The catalysed reaction is tRNA(Phe) + L-phenylalanine + ATP = L-phenylalanyl-tRNA(Phe) + AMP + diphosphate + H(+). This Wolinella succinogenes (strain ATCC 29543 / DSM 1740 / CCUG 13145 / JCM 31913 / LMG 7466 / NCTC 11488 / FDC 602W) (Vibrio succinogenes) protein is Phenylalanine--tRNA ligase alpha subunit.